Reading from the N-terminus, the 722-residue chain is Peroxisomal bifunctional enzyme (722 aa).

The segment at 1–281 (MAEYLRLPHS…FAEKSANKWS (281 aa)) is enoyl-CoA hydratase / isomerase. A2 bears the Blocked amino end (Ala) mark. K38 is subject to N6-succinyllysine. G100 lines the substrate pocket. At K173 the chain carries N6-acetyllysine; alternate. K173 bears the N6-succinyllysine; alternate mark. The residue at position 182 (K182) is an N6-succinyllysine. 2 positions are modified to N6-acetyllysine; alternate: K190 and K218. 2 positions are modified to N6-succinyllysine; alternate: K190 and K218. K241 bears the N6-succinyllysine mark. At K249 the chain carries N6-acetyllysine. The residue at position 253 (K253) is an N6-succinyllysine. K275 bears the N6-acetyllysine; alternate mark. The residue at position 275 (K275) is an N6-succinyllysine; alternate. 3 positions are modified to N6-succinyllysine: K279, K289, and K330. The interval 282–571 (TPSGASWKTA…DMLCEAGRFG (290 aa)) is 3-hydroxyacyl-CoA dehydrogenase. N6-acetyllysine is present on residues K345, K359, and K463. K531 carries the post-translational modification N6-succinyllysine. Phosphothreonine is present on T547. An N6-succinyllysine modification is found at K576. N6-acetyllysine; alternate is present on residues K583, K590, and K709. N6-succinyllysine; alternate is present on residues K583, K590, and K709. The short motif at 720 to 722 (SKL) is the Microbody targeting signal element. K721 carries the post-translational modification N6-succinyllysine.

In the N-terminal section; belongs to the enoyl-CoA hydratase/isomerase family. It in the C-terminal section; belongs to the 3-hydroxyacyl-CoA dehydrogenase family. In terms of assembly, monomer. Acetylated, leading to enhanced enzyme activity. Acetylation is enhanced by up to 80% after treatment either with trichostin A (TCA) or with nicotinamide (NAM) with highest increase on Lys-345. Acetylation and enzyme activity increased by about 1.5% on addition of fatty acids.

Its subcellular location is the peroxisome. It catalyses the reaction a (3S)-3-hydroxyacyl-CoA = a (2E)-enoyl-CoA + H2O. The enzyme catalyses a 4-saturated-(3S)-3-hydroxyacyl-CoA = a (3E)-enoyl-CoA + H2O. It carries out the reaction a (3Z)-enoyl-CoA = a 4-saturated (2E)-enoyl-CoA. The catalysed reaction is a (3E)-enoyl-CoA = a 4-saturated (2E)-enoyl-CoA. It catalyses the reaction a (3S)-3-hydroxyacyl-CoA + NAD(+) = a 3-oxoacyl-CoA + NADH + H(+). The enzyme catalyses (2S,3S)-3-hydroxy-2-methylbutanoyl-CoA = (2E)-2-methylbut-2-enoyl-CoA + H2O. It carries out the reaction (3E,5Z)-tetradecadienoyl-CoA = (2E,5Z)-tetradecadienoyl-CoA. The catalysed reaction is (3E,5Z)-octadienoyl-CoA = (2E,5Z)-octadienoyl-CoA. It catalyses the reaction (3S)-hydroxydecanoyl-CoA + NAD(+) = 3-oxodecanoyl-CoA + NADH + H(+). The enzyme catalyses (3E)-decenoyl-CoA = (2E)-decenoyl-CoA. It carries out the reaction (3Z)-hexenoyl-CoA = (2E)-hexenoyl-CoA. The catalysed reaction is (3E)-hexenoyl-CoA = (2E)-hexenoyl-CoA. It catalyses the reaction (3S)-hydroxydecanoyl-CoA = (2E)-decenoyl-CoA + H2O. The enzyme catalyses (3S)-hydroxyhexanoyl-CoA = (2E)-hexenoyl-CoA + H2O. It carries out the reaction (3S)-hydroxyhexadecanoyl-CoA + NAD(+) = 3-oxohexadecanoyl-CoA + NADH + H(+). The catalysed reaction is (3S)-hydroxyhexadecanoyl-CoA = (2E)-hexadecenoyl-CoA + H2O. It catalyses the reaction (2E)-hexadecenedioyl-CoA + H2O = (3S)-hydroxyhexadecanedioyl-CoA. The enzyme catalyses (3S)-hydroxyhexadecanedioyl-CoA + NAD(+) = 3-oxohexadecanedioyl-CoA + NADH + H(+). It functions in the pathway lipid metabolism; fatty acid beta-oxidation. With respect to regulation, enzyme activity enhanced by acetylation. Peroxisomal trifunctional enzyme possessing 2-enoyl-CoA hydratase, 3-hydroxyacyl-CoA dehydrogenase, and delta 3, delta 2-enoyl-CoA isomerase activities. Catalyzes two of the four reactions of the long chain fatty acids peroxisomal beta-oxidation pathway. Can also use branched-chain fatty acids such as 2-methyl-2E-butenoyl-CoA as a substrate, which is hydrated into (2S,3S)-3-hydroxy-2-methylbutanoyl-CoA. Optimal isomerase for 2,5 double bonds into 3,5 form isomerization in a range of enoyl-CoA species. Also able to isomerize both 3-cis and 3-trans double bonds into the 2-trans form in a range of enoyl-CoA species. Regulates the amount of medium-chain dicarboxylic fatty acids which are essential regulators of all fatty acid oxidation pathways. Also involved in the degradation of long-chain dicarboxylic acids through peroxisomal beta-oxidation. In Rattus norvegicus (Rat), this protein is Peroxisomal bifunctional enzyme.